The following is a 3421-amino-acid chain: Hemocyanin 2 (3421 aa).

The N-terminal stretch at 1–19 is a signal peptide; sequence MWTILALLTATLLFEGAFS. The interval 20–442 is functional unit a (wall); that stretch reads VDTVVRKNVD…KPPVPVAQAN (423 aa). His-62 is a binding site for Cu cation. A disulfide bridge connects residues Cys-68 and Cys-78. The segment at residues 79–81 is a cross-link (2'-(S-cysteinyl)-histidine (Cys-His)); that stretch reads CLH. The Cu cation site is built by His-81, His-90, His-200, His-204, and His-231. 2 disulfide bridges follow: Cys-190–Cys-257 and Cys-344–Cys-356. Asn-408 carries an N-linked (GlcNAc...) asparagine glycan. A functional unit b (wall) region spans residues 443–853; that stretch reads LAVRKNINDL…RADAKDFGHS (411 aa). A Cu cation-binding site is contributed by His-483. Cys-489 and Cys-500 are joined by a disulfide. Positions 501 to 503 form a cross-link, 2'-(S-cysteinyl)-histidine (Cys-His); the sequence is CVH. Cu cation-binding residues include His-503, His-512, His-622, His-626, His-653, and His-894. Residues Cys-612 and Cys-678 are joined by a disulfide bond. The stretch at 632-673 is one WD 1 repeat; sequence SEKYSMSSLHYTAFDPIFYLHHSNVDRLWAIWQALQIRRGKS. The segment at 854 to 1275 is functional unit c (wall); sequence RKIRKAVDSL…DEYREAVTSA (422 aa). A disulfide bridge links Cys-900 with Cys-911. Positions 912–914 form a cross-link, 2'-(S-cysteinyl)-histidine (Cys-His); it reads CVH. 5 residues coordinate Cu cation: His-914, His-923, His-1033, His-1037, and His-1063. 2 disulfides stabilise this stretch: Cys-1023-Cys-1090 and Cys-1180-Cys-1187. Residues 1043–1084 form a WD 2 repeat; it reads NEPYSMSSLRYTTYDPIFFLHRSNTDRLWAIWQALQKYRGKP. N-linked (GlcNAc...) asparagine glycosylation is present at Asn-1183. The functional unit d (wall) stretch occupies residues 1276–1685; sequence SHIRKNIRDL…NIYYDGLSQH (410 aa). His-1313 is a binding site for Cu cation. The cysteines at positions 1319 and 1328 are disulfide-linked. A cross-link (2'-(S-cysteinyl)-histidine (Cys-His)) is located at residues 1329 to 1331; the sequence is CVH. Cu cation-binding residues include His-1331 and His-1340. The stretch at 1387–1425 is one WD 3 repeat; that stretch reads QTFDPNPFFRGHIAFENAVTSRDPQPELWDNKDFYENVM. 2 disulfide bridges follow: Cys-1434–Cys-1501 and Cys-1590–Cys-1599. 3 residues coordinate Cu cation: His-1444, His-1448, and His-1475. The WD 4 repeat unit spans residues 1454 to 1495; the sequence is RAKYSLSSLDYTAFDPVFFLHHANVDRIWAIWQDLQRYRKKP. The N-linked (GlcNAc...) asparagine glycan is linked to Asn-1653. The tract at residues 1686–2102 is functional unit e (wall); the sequence is NLVRKEVSSL…HGINVRHVGR (417 aa). A Cu cation-binding site is contributed by His-1726. A disulfide bridge links Cys-1732 with Cys-1743. The segment at residues 1744–1746 is a cross-link (2'-(S-cysteinyl)-histidine (Cys-His)); sequence CLH. 5 residues coordinate Cu cation: His-1746, His-1755, His-1868, His-1872, and His-1899. 2 disulfides stabilise this stretch: Cys-1858–Cys-1925 and Cys-2014–Cys-2020. A WD 5 repeat occupies 1878–1919; the sequence is SKTHSIGHLHYASYDPLFYIHHSQTDRIWAIWQALQEHRGLS. Residues 2103-2522 are functional unit f (wall); sequence NRIRMELSEL…DDHGSDHIAG (420 aa). His-2143 is a binding site for Cu cation. Cys-2149 and Cys-2159 form a disulfide bridge. Positions 2160–2162 form a cross-link, 2'-(S-cysteinyl)-histidine (Cys-His); the sequence is CIH. Residues His-2162, His-2171, His-2281, His-2285, and His-2312 each coordinate Cu cation. One copy of the WD 6 repeat lies at 2168–2204; the sequence is PHWHRLYTLQMDMALLSHGSAVAIPYWDWTKPISKLP. 2 disulfides stabilise this stretch: Cys-2271–Cys-2338 and Cys-2425–Cys-2431. A functional unit g (internal arc) region spans residues 2523 to 2929; sequence SGVRKDVTSL…SGHDHSERHD (407 aa). His-2563 provides a ligand contact to Cu cation. A disulfide bond links Cys-2569 and Cys-2579. The segment at residues 2580-2582 is a cross-link (2'-(S-cysteinyl)-histidine (Cys-His)); sequence CTH. Cu cation contacts are provided by His-2582, His-2591, His-2691, His-2695, and His-2722. 2 disulfides stabilise this stretch: Cys-2681-Cys-2748 and Cys-2835-Cys-2841. The WD 7 repeat unit spans residues 2700–2742; that stretch reads GHTPYGMSSLEYTAYDPLFYLHHSNTDRIWAIWQALQKYRGFQ. Residues 2898 to 2927 are disordered; sequence PSDRIKSPTIEHHGGDHHGGDTSGHDHSER. A functional unit h (internal slab) region spans residues 2930–3421; sequence GFFRKEVGSL…VRIHIHIEDE (492 aa). His-2970 is a Cu cation binding site. Cysteines 2976 and 2986 form a disulfide. The 2'-(S-cysteinyl)-histidine (Cys-His) cross-link spans 2987–2989; it reads CVH. Cu cation contacts are provided by His-2989, His-2998, His-3099, His-3103, and His-3130. 2 disulfide bridges follow: Cys-3089/Cys-3156 and Cys-3374/Cys-3407. The stretch at 3109 to 3150 is one WD 8 repeat; that stretch reads TETYSMSSLAFSAYDPVFMILHSGLDRLWIIWQELQKLRKKP.

This sequence belongs to the tyrosinase family. Hemocyanin subfamily. As to quaternary structure, homo-didecamer and homo-multidecamer. Post-translationally, probably N-glycosylated. Asn-2489 is buried deeply in the protein which make it inaccessible for sugar attachment. As to expression, hemolymph.

The protein localises to the secreted. It localises to the extracellular space. In terms of biological role, hemocyanins are copper-containing oxygen carriers occurring freely dissolved in the hemolymph of many mollusks and arthropods. This is Hemocyanin 2 from Megathura crenulata (Giant keyhole limpet).